A 349-amino-acid chain; its full sequence is 5-deoxyribose 1-phosphate isomerase (349 aa).

Substrate is bound by residues 49 to 51 (RGA), Arg92, and Gln199. The Proton donor role is filled by Asp240. 250-251 (NK) contacts substrate.

This sequence belongs to the EIF-2B alpha/beta/delta subunits family. DrdI subfamily.

It catalyses the reaction 5-deoxy-alpha-D-ribose 1-phosphate = 5-deoxy-D-ribulose 1-phosphate. It participates in carbohydrate degradation. Functionally, catalyzes the isomerization of 5-deoxy-alpha-D-ribose 1-phosphate to 5-deoxy-D-ribulose 1-phosphate, as part of a 5-deoxyribose salvage pathway that recycles this toxic radical SAM enzyme by-product to mainstream metabolites. The chain is 5-deoxyribose 1-phosphate isomerase from Clostridium botulinum (strain ATCC 19397 / Type A).